The primary structure comprises 146 residues: Anti-sigma F factor (146 aa).

It belongs to the anti-sigma-factor family.

The enzyme catalyses L-seryl-[protein] + ATP = O-phospho-L-seryl-[protein] + ADP + H(+). The catalysed reaction is L-threonyl-[protein] + ATP = O-phospho-L-threonyl-[protein] + ADP + H(+). Its function is as follows. Binds to sigma F and blocks its ability to form an RNA polymerase holoenzyme (E-sigma F). Phosphorylates SpoIIAA on a serine residue. This phosphorylation may enable SpoIIAA to act as an anti-anti-sigma factor that counteracts SpoIIAB and thus releases sigma F from inhibition. The chain is Anti-sigma F factor from Bacillus cereus (strain ATCC 14579 / DSM 31 / CCUG 7414 / JCM 2152 / NBRC 15305 / NCIMB 9373 / NCTC 2599 / NRRL B-3711).